The chain runs to 64 residues: Large ribosomal subunit protein bL33 (64 aa).

Belongs to the bacterial ribosomal protein bL33 family.

This chain is Large ribosomal subunit protein bL33, found in Synechococcus elongatus (strain ATCC 33912 / PCC 7942 / FACHB-805) (Anacystis nidulans R2).